We begin with the raw amino-acid sequence, 392 residues long: 6-aminohexanoate-dimer hydrolase (392 aa).

Residues 1 to 22 (MNARSTGQHPARYPGAAAGEPT) form a disordered region. Ser-112 is a catalytic residue.

The catalysed reaction is [N-(6-aminohexanoyl)](n) + H2O = [N-(6-aminohexanoyl)](n-1) + 6-aminohexanoate. The enzyme catalyses N-(6-aminohexanoyl)-6-aminohexanoate + H2O = 2 6-aminohexanoate. It participates in xenobiotic degradation; nylon-6 oligomer degradation. Its function is as follows. Involved in nylon oligomer degradation. This chain is 6-aminohexanoate-dimer hydrolase, found in Paenarthrobacter ureafaciens.